Reading from the N-terminus, the 353-residue chain is Phospho-N-acetylmuramoyl-pentapeptide-transferase (353 aa).

Transmembrane regions (helical) follow at residues 24–44 (LGFF…ILWA), 66–86 (TPTM…VLCA), 88–108 (LGNL…FVGF), 129–149 (FGML…KGLD), 160–180 (PLFE…FLST), 192–212 (GLAS…VYVA), 229–249 (VGEL…FLWY), 256–276 (VFMG…NAIV), 281–301 (ILLV…ILQV), and 330–350 (KVIV…LLSL).

This sequence belongs to the glycosyltransferase 4 family. MraY subfamily. Requires Mg(2+) as cofactor.

It is found in the cell inner membrane. It catalyses the reaction UDP-N-acetyl-alpha-D-muramoyl-L-alanyl-gamma-D-glutamyl-meso-2,6-diaminopimeloyl-D-alanyl-D-alanine + di-trans,octa-cis-undecaprenyl phosphate = di-trans,octa-cis-undecaprenyl diphospho-N-acetyl-alpha-D-muramoyl-L-alanyl-D-glutamyl-meso-2,6-diaminopimeloyl-D-alanyl-D-alanine + UMP. Its pathway is cell wall biogenesis; peptidoglycan biosynthesis. Functionally, catalyzes the initial step of the lipid cycle reactions in the biosynthesis of the cell wall peptidoglycan: transfers peptidoglycan precursor phospho-MurNAc-pentapeptide from UDP-MurNAc-pentapeptide onto the lipid carrier undecaprenyl phosphate, yielding undecaprenyl-pyrophosphoryl-MurNAc-pentapeptide, known as lipid I. This chain is Phospho-N-acetylmuramoyl-pentapeptide-transferase, found in Helicobacter pylori (strain Shi470).